The primary structure comprises 396 residues: Phosphopentomutase (396 aa).

Mn(2+) is bound by residues Asp14, Asp286, His291, Asp327, His328, and His339.

Belongs to the phosphopentomutase family. The cofactor is Mn(2+).

Its subcellular location is the cytoplasm. The enzyme catalyses 2-deoxy-alpha-D-ribose 1-phosphate = 2-deoxy-D-ribose 5-phosphate. It carries out the reaction alpha-D-ribose 1-phosphate = D-ribose 5-phosphate. It participates in carbohydrate degradation; 2-deoxy-D-ribose 1-phosphate degradation; D-glyceraldehyde 3-phosphate and acetaldehyde from 2-deoxy-alpha-D-ribose 1-phosphate: step 1/2. In terms of biological role, isomerase that catalyzes the conversion of deoxy-ribose 1-phosphate (dRib-1-P) and ribose 1-phosphate (Rib-1-P) to deoxy-ribose 5-phosphate (dRib-5-P) and ribose 5-phosphate (Rib-5-P), respectively. This is Phosphopentomutase from Staphylococcus carnosus (strain TM300).